We begin with the raw amino-acid sequence, 353 residues long: DNA-repair protein XRCC1 (353 aa).

Over residues 1–12 (MSQKRNLPSWMS) the composition is skewed to polar residues. The disordered stretch occupies residues 1 to 57 (MSQKRNLPSWMSSRDPEITPSKSHCKKPKDEGPTEEHNSRNAPSNKSEHAEPSSNTT). A compositionally biased stretch (basic and acidic residues) spans 28 to 39 (PKDEGPTEEHNS). The BRCT 1 domain occupies 58 to 146 (EFSKLMEGVV…KLVDIEQYLM (89 aa)). The segment at 150–194 (KPWRKSSSPQDANREKREHLSKKPEKQVEKKTETRGTPSTSSKNR) is disordered. The span at 161–183 (ANREKREHLSKKPEKQVEKKTET) shows a compositional bias: basic and acidic residues. Residues 184–194 (RGTPSTSSKNR) show a composition bias toward polar residues. A coiled-coil region spans residues 240–260 (AAEGVLTCLQDAIDSLEQKQD). A BRCT 2 domain is found at 266–347 (ELWSFVPRVV…EEEIELAYRN (82 aa)).

As to quaternary structure, homodimer. Interacts with polynucleotide kinase (PNK), DNA polymerase-beta (POLB) and DNA ligase III (LIG3). Interacts with ZDP and ROS1. Binds to various forms of double-stranded DNA (e.g. methylated, unmethylated, with single-nucleotide gap flanked by 3'-phosphate or 5'-phosphate ends).

It localises to the nucleus. Its function is as follows. Corrects defective DNA strand-break repair and sister chromatid exchange following treatment with ionizing radiation and alkylating agents. Involved in DNA demethylation pathway by stimulating cytosine methylation (5-meC) excision, gap tailoring, and DNA ligation. This is DNA-repair protein XRCC1 from Arabidopsis thaliana (Mouse-ear cress).